Consider the following 605-residue polypeptide: MNHFPKLLSSQIGFDVAQSMLEYFDRHYRIFREAAVEAKALFERADWHGLQRLARERITSYDERVQECVEVLQDEYDAESIDDEVWQQIKLHYIGLLTSHRQPECAETFFNSVCCKILHRSYFNNDFIFVRPAISTEYLENDEPAAKPTYRAYYPGTDGLAVTLERIVTNFQLEPPFEDLARDIACVMQAIHDEFGRFDEAPNFQIHVLSSLFFRNKSAYIVGRIINADRVLPFAVPIRHVRPGLLALDTVLLRRDLLQIIFSFSHSYFLVDMDVPSAYVDFLCTIMPGKPKAEIYTSVGLQKQGKNLFYRDLLHHLSHSSDRFIVAPGIKGLVMLVFTLPSFPYVFKIIKDHFPPPKETTRRQIMEKYLLVKRHDRLGRMADTLEYSSVALPLARLDHALVRELEKEVPSLLEYEGDNLVIKHLYIERRMTPLNLYLQNGTDAEVEHGVKEYGNAVKELMKANIFPGDMLYKNFGVTRHGRVVFYDYDEIEYLTDCNVRRVPPPRNEEDELSGEPWYTVGPHDIFPETYGPFLLGDPRVRAAFLKHHADFFDPALWQASKDKLLQGELPDFFPYDASLRFCVRYPERFRATDERAPARGAQRAA.

Residues 327 to 333 (APGIKGL) and Lys348 contribute to the ATP site. Asp383 is a catalytic residue.

Belongs to the AceK family.

The protein localises to the cytoplasm. The enzyme catalyses L-seryl-[isocitrate dehydrogenase] + ATP = O-phospho-L-seryl-[isocitrate dehydrogenase] + ADP + H(+). Its function is as follows. Bifunctional enzyme which can phosphorylate or dephosphorylate isocitrate dehydrogenase (IDH) on a specific serine residue. This is a regulatory mechanism which enables bacteria to bypass the Krebs cycle via the glyoxylate shunt in response to the source of carbon. When bacteria are grown on glucose, IDH is fully active and unphosphorylated, but when grown on acetate or ethanol, the activity of IDH declines drastically concomitant with its phosphorylation. The protein is Isocitrate dehydrogenase kinase/phosphatase of Burkholderia multivorans (strain ATCC 17616 / 249).